A 358-amino-acid polypeptide reads, in one-letter code: Phosphoserine aminotransferase (358 aa).

Arg43 is a binding site for L-glutamate. Pyridoxal 5'-phosphate-binding residues include Trp103, Thr153, Asp172, and Gln195. Lys196 is subject to N6-(pyridoxal phosphate)lysine. 236–237 contacts pyridoxal 5'-phosphate; that stretch reads NT.

This sequence belongs to the class-V pyridoxal-phosphate-dependent aminotransferase family. SerC subfamily. As to quaternary structure, homodimer. Requires pyridoxal 5'-phosphate as cofactor.

The protein resides in the cytoplasm. It carries out the reaction O-phospho-L-serine + 2-oxoglutarate = 3-phosphooxypyruvate + L-glutamate. The enzyme catalyses 4-(phosphooxy)-L-threonine + 2-oxoglutarate = (R)-3-hydroxy-2-oxo-4-phosphooxybutanoate + L-glutamate. It participates in amino-acid biosynthesis; L-serine biosynthesis; L-serine from 3-phospho-D-glycerate: step 2/3. Its pathway is cofactor biosynthesis; pyridoxine 5'-phosphate biosynthesis; pyridoxine 5'-phosphate from D-erythrose 4-phosphate: step 3/5. Its function is as follows. Catalyzes the reversible conversion of 3-phosphohydroxypyruvate to phosphoserine and of 3-hydroxy-2-oxo-4-phosphonooxybutanoate to phosphohydroxythreonine. In Dichelobacter nodosus (strain VCS1703A), this protein is Phosphoserine aminotransferase.